The sequence spans 379 residues: Guanine nucleotide-binding protein G(s) subunit alpha (379 aa).

In terms of domain architecture, G-alpha spans 38-379; it reads STHRLLLLGA…RMHLRQYELL (342 aa). Residues 41–54 are G1 motif; it reads RLLLLGAGESGKST. Residues 46 to 53, 182 to 188, 207 to 211, 276 to 279, and Ala351 contribute to the GTP site; these read GAGESGKS, LRCRVLT, DVGGQ, and NKQD. Mg(2+) is bound by residues Ser53 and Thr188. Positions 180–188 are G2 motif; that stretch reads DILRCRVLT. The segment at 203–212 is G3 motif; it reads FHMFDVGGQR. The interval 272–279 is G4 motif; it reads ILFLNKQD. A G5 motif region spans residues 349-354; sequence TCAVDT.

This sequence belongs to the G-alpha family. G(s) subfamily. In terms of assembly, g proteins are composed of 3 units; alpha, beta and gamma. The alpha chain contains the guanine nucleotide binding site.

In terms of biological role, guanine nucleotide-binding proteins (G proteins) are involved as modulators or transducers in various transmembrane signaling systems. The G(s) protein is involved in hormonal regulation of adenylate cyclase: it activates the cyclase in response to beta-adrenergic stimuli. The polypeptide is Guanine nucleotide-binding protein G(s) subunit alpha (Schistosoma mansoni (Blood fluke)).